Reading from the N-terminus, the 569-residue chain is MVAIKEMKEFAFARPSLVETLNKKKKFLKKKEKRTFVLSIYAFITFIIFCIGILYFTNKSSAHNNNNNKNEHSLKKEEIELLRVLLEKYKKQKDGILNESSNEEDEEKYTLNSETYNNKNNVSNIKNDSIKSKKEEYINLERILLEKYKKFINENNEENRKELSNILHKLLEINKLILREEKDDKKVYLINDNYDEKGALEIGMNEEMKYKKEDPINNIKYASKFFKFMKEHNKVYKNIDEQMRKFEIFKINYISIKNHNKLNKNAMYKKKVNQFSDYSEEELKEYFKTLLHVPNHMIEKYSKPFENHLKDNILISEFYTNGKRNEKDIFSKVPEILDYREKGIVHEPKDQGLCGSCWAFASVGNIESVFAKKNKNILSFSEQEVVDCSKDNFGCDGGHPFYSFLYVLQNELCLGDEYKYKAKDDMFCLNYRCKRKVSLSSIGAVKENQLILALNEVGPLSVNVGVNNDFVAYSEGVYNGTCSEELNHSVLLVGYGQVEKTKLNYNNKIQTYNTKENSNQPDDNIIYYWIIKNSWSKKWGENGFMRLSRNKNGDNVFCGIGEEVFYPIL.

Residues 1–35 (MVAIKEMKEFAFARPSLVETLNKKKKFLKKKEKRT) lie on the Cytoplasmic side of the membrane. The propeptide at 1 to 332 (MVAIKEMKEF…KRNEKDIFSK (332 aa)) is activation peptide. A helical; Signal-anchor for type II membrane protein membrane pass occupies residues 36-56 (FVLSIYAFITFIIFCIGILYF). Residues 57 to 569 (TNKSSAHNNN…IGEEVFYPIL (513 aa)) lie on the Lumenal side of the membrane. N-linked (GlcNAc...) asparagine glycans are attached at residues Asn58, Asn98, Asn121, and Asn127. Residues 97 to 118 (LNESSNEEDEEKYTLNSETYNN) are disordered. 3 cysteine pairs are disulfide-bonded: Cys354–Cys395, Cys388–Cys428, and Cys413–Cys433. Residue Cys357 is part of the active site. N-linked (GlcNAc...) asparagine glycans are attached at residues Asn479 and Asn487. Cys482 and Cys558 are joined by a disulfide. Residues His488 and Asn533 contribute to the active site.

Belongs to the peptidase C1 family. Post-translationally, contains disulfide bonds.

It is found in the membrane. The protein localises to the cytoplasmic granule. Cysteine protease. In the mosquito midgut, required for parasite development. The chain is Falcipain-1 from Plasmodium falciparum (isolate 3D7).